A 179-amino-acid polypeptide reads, in one-letter code: Large ribosomal subunit protein uL5 (179 aa).

Belongs to the universal ribosomal protein uL5 family. In terms of assembly, part of the 50S ribosomal subunit; part of the 5S rRNA/L5/L18/L25 subcomplex. Contacts the 5S rRNA and the P site tRNA. Forms a bridge to the 30S subunit in the 70S ribosome.

This is one of the proteins that bind and probably mediate the attachment of the 5S RNA into the large ribosomal subunit, where it forms part of the central protuberance. In the 70S ribosome it contacts protein S13 of the 30S subunit (bridge B1b), connecting the 2 subunits; this bridge is implicated in subunit movement. Contacts the P site tRNA; the 5S rRNA and some of its associated proteins might help stabilize positioning of ribosome-bound tRNAs. This is Large ribosomal subunit protein uL5 from Serratia proteamaculans (strain 568).